A 386-amino-acid chain; its full sequence is Acetylornithine aminotransferase (386 aa).

Residues 94-95 (GT) and F121 contribute to the pyridoxal 5'-phosphate site. R124 lines the N(2)-acetyl-L-ornithine pocket. 206 to 209 (DEVQ) contacts pyridoxal 5'-phosphate. K235 carries the post-translational modification N6-(pyridoxal phosphate)lysine. S263 contacts N(2)-acetyl-L-ornithine. T264 contacts pyridoxal 5'-phosphate.

Belongs to the class-III pyridoxal-phosphate-dependent aminotransferase family. ArgD subfamily. In terms of assembly, homodimer. Pyridoxal 5'-phosphate is required as a cofactor.

The protein resides in the cytoplasm. It catalyses the reaction N(2)-acetyl-L-ornithine + 2-oxoglutarate = N-acetyl-L-glutamate 5-semialdehyde + L-glutamate. It functions in the pathway amino-acid biosynthesis; L-arginine biosynthesis; N(2)-acetyl-L-ornithine from L-glutamate: step 4/4. The sequence is that of Acetylornithine aminotransferase from Listeria monocytogenes serotype 4b (strain F2365).